A 329-amino-acid polypeptide reads, in one-letter code: 4-hydroxythreonine-4-phosphate dehydrogenase (329 aa).

Substrate is bound by residues His-136 and Thr-137. Residues His-166, His-211, and His-266 each contribute to the a divalent metal cation site. Residues Lys-274, Asn-283, and Arg-292 each coordinate substrate.

Belongs to the PdxA family. In terms of assembly, homodimer. Zn(2+) is required as a cofactor. Requires Mg(2+) as cofactor. The cofactor is Co(2+).

The protein localises to the cytoplasm. The catalysed reaction is 4-(phosphooxy)-L-threonine + NAD(+) = 3-amino-2-oxopropyl phosphate + CO2 + NADH. It functions in the pathway cofactor biosynthesis; pyridoxine 5'-phosphate biosynthesis; pyridoxine 5'-phosphate from D-erythrose 4-phosphate: step 4/5. Its function is as follows. Catalyzes the NAD(P)-dependent oxidation of 4-(phosphooxy)-L-threonine (HTP) into 2-amino-3-oxo-4-(phosphooxy)butyric acid which spontaneously decarboxylates to form 3-amino-2-oxopropyl phosphate (AHAP). This Shigella dysenteriae serotype 1 (strain Sd197) protein is 4-hydroxythreonine-4-phosphate dehydrogenase.